An 84-amino-acid chain; its full sequence is Subtilisin-chymotrypsin inhibitor-2A (84 aa).

The segment at 1-23 (MSSVEKKPEGVNTGAGDRHNLKT) is disordered.

It belongs to the protease inhibitor I13 (potato type I serine protease inhibitor) family.

Inhibits both subtilisin and chymotrypsin. The sequence is that of Subtilisin-chymotrypsin inhibitor-2A from Hordeum vulgare (Barley).